Reading from the N-terminus, the 887-residue chain is Bifunctional uridylyltransferase/uridylyl-removing enzyme (887 aa).

The tract at residues 1-337 is uridylyltransferase; sequence MINTSPLLNY…RLPNYERKIE (337 aa). Residues 339–699 are uridylyl-removing; it reads VNDHFKIVDN…AHRKAAQDAV (361 aa). The HD domain maps to 457-579; it reads VDAHTLLLLR…LGDMEHLDYL (123 aa). 2 ACT domains span residues 700-782 and 809-887; these read QIFI…LMQR and MVEI…ICQH.

The protein belongs to the GlnD family. It depends on Mg(2+) as a cofactor.

It catalyses the reaction [protein-PII]-L-tyrosine + UTP = [protein-PII]-uridylyl-L-tyrosine + diphosphate. The catalysed reaction is [protein-PII]-uridylyl-L-tyrosine + H2O = [protein-PII]-L-tyrosine + UMP + H(+). Its activity is regulated as follows. Uridylyltransferase (UTase) activity is inhibited by glutamine, while glutamine activates uridylyl-removing (UR) activity. In terms of biological role, modifies, by uridylylation and deuridylylation, the PII regulatory proteins (GlnB and homologs), in response to the nitrogen status of the cell that GlnD senses through the glutamine level. Under low glutamine levels, catalyzes the conversion of the PII proteins and UTP to PII-UMP and PPi, while under higher glutamine levels, GlnD hydrolyzes PII-UMP to PII and UMP (deuridylylation). Thus, controls uridylylation state and activity of the PII proteins, and plays an important role in the regulation of nitrogen assimilation and metabolism. The protein is Bifunctional uridylyltransferase/uridylyl-removing enzyme of Acinetobacter baumannii (strain ACICU).